A 155-amino-acid chain; its full sequence is Small ribosomal subunit protein uS7c (155 aa).

Belongs to the universal ribosomal protein uS7 family. As to quaternary structure, part of the 30S ribosomal subunit.

The protein localises to the plastid. It localises to the chloroplast. Its function is as follows. One of the primary rRNA binding proteins, it binds directly to 16S rRNA where it nucleates assembly of the head domain of the 30S subunit. This chain is Small ribosomal subunit protein uS7c (rps7), found in Ananas comosus (Pineapple).